A 436-amino-acid chain; its full sequence is Bystin (436 aa).

Residues 1–105 (MPKLKVTRGA…GSDEEDEEWP (105 aa)) form a disordered region. Phosphoserine is present on Ser54. Over residues 70 to 86 (TEHATGDRPAKPRERAT) the composition is skewed to basic and acidic residues. The span at 96–105 (GSDEEDEEWP) shows a compositional bias: acidic residues. A Phosphoserine modification is found at Ser97. Thr155 bears the Phosphothreonine mark. Phosphoserine is present on residues Ser166 and Ser413.

Belongs to the bystin family. In terms of assembly, binds trophinin, tastin and cytokeratins.

The protein resides in the cytoplasm. It localises to the nucleus. Its subcellular location is the nucleolus. Functionally, required for processing of 20S pre-rRNA precursor and biogenesis of 40S ribosomal subunits. The sequence is that of Bystin from Rattus norvegicus (Rat).